The chain runs to 90 residues: Histone H1.M6.2 (90 aa).

The tract at residues 1–90 (MSDAAVPPKK…KAVKKAPKKK (90 aa)) is disordered. A compositionally biased stretch (basic residues) spans 11-90 (ASPKKAAAKK…KAVKKAPKKK (80 aa)).

It is found in the nucleus. It localises to the chromosome. This chain is Histone H1.M6.2, found in Trypanosoma cruzi.